Reading from the N-terminus, the 4743-residue chain is Apolipoprotein B-100 (4743 aa).

A signal peptide spans 1-27; sequence MGPQRPALRAPLLLLFLLLFLDTSVWA. The interval 29-113 is heparin-binding; the sequence is DATRFKHLRK…KNSEEFASAM (85 aa). One can recognise a Vitellogenin domain in the interval 33–660; that stretch reads FKHLRKYVYS…PSSYLPKESM (628 aa). Cys-65 and Cys-84 are disulfide-bonded. Asn-172 carries an N-linked (GlcNAc...) asparagine glycan. 4 disulfides stabilise this stretch: Cys-173–Cys-199, Cys-232–Cys-248, Cys-372–Cys-377, and Cys-466–Cys-501. Residues 219 to 293 are heparin-binding; the sequence is VRPLSTLISS…RFFRGGINQV (75 aa). A heparin-binding region spans residues 890-947; sequence NTNFFHESGLEARVALKAGQLKVIIPSPKRPVKLFSGSNTLHLVSTTKTEVIPPLIEN. Cysteines 954 and 964 form a disulfide. N-linked (GlcNAc...) asparagine glycosylation is found at Asn-971, Asn-1336, Asn-1345, and Asn-1491. Lys-1973 carries the post-translational modification N6-acetyllysine. Ser-2006 is modified (phosphoserine). The heparin-binding stretch occupies residues 2010 to 2145; it reads NDAFDEPREF…EKLSQLETYA (136 aa). N-linked (GlcNAc...) asparagine glycosylation is found at Asn-2094, Asn-2522, Asn-2662, Asn-2741, Asn-2791, Asn-2897, Asn-2944, and Asn-3063. The interval 3123–3198 is heparin-binding; it reads FLKTTKQSFD…KIKFDKYKTE (76 aa). The basic (possible receptor binding region) stretch occupies residues 3136-3146; sequence KAQYKKNRDKH. N-linked (GlcNAc...) asparagine glycans are attached at residues Asn-3186, Asn-3299, and Asn-3321. The segment at 3336-3356 is LDL receptor binding; that stretch reads VTDALQYKLEGTSRLMRKKVL. Residues 3346–3479 form a heparin-binding region; it reads GTSRLMRKKV…QEYSGSVANE (134 aa). A basic (possible receptor binding region) region spans residues 3349–3357; that stretch reads RLMRKKVLK. 3 N-linked (GlcNAc...) asparagine glycosylation sites follow: Asn-3428, Asn-3715, and Asn-3828. The residue at position 3981 (Ser-3981) is a Phosphoserine. Position 3985 is a phosphothreonine (Thr-3985). Asn-4203 and Asn-4232 each carry an N-linked (GlcNAc...) asparagine glycan.

In terms of assembly, interacts with PCSK9. Interacts with MTTP. Interacts with AUP1. Interacts with CIDEB. Post-translationally, palmitoylated; structural requirement for proper assembly of the hydrophobic core of the lipoprotein particle. In terms of tissue distribution, detected in intestine and liver (at protein level).

The protein resides in the cytoplasm. The protein localises to the secreted. It localises to the lipid droplet. In terms of biological role, apolipoprotein B is a major protein constituent of chylomicrons (apo B-48), LDL (apo B-100) and VLDL (apo B-100). Apo B-100 functions as a recognition signal for the cellular binding and internalization of LDL particles by the apoB/E receptor. The chain is Apolipoprotein B-100 (Apob) from Rattus norvegicus (Rat).